A 1045-amino-acid polypeptide reads, in one-letter code: Unconventional myosin-Ia (1045 aa).

A Myosin motor domain is found at 11-697 (AAVGDLVMLD…TLFDLEKRRQ (687 aa)). 104–111 (GESGAGKT) provides a ligand contact to ATP. The interval 574–596 (VATLMKNLYSKNPNYIRCIKPND) is actin-binding. 3 IQ domains span residues 701 to 727 (AELA…RKSQ), 723 to 750 (MRKS…KRSV), and 746 to 774 (MKRS…RSDA). One can recognise a TH1 domain in the interval 861 to 1044 (KALYAQSLQQ…RGSHKMEILV (184 aa)).

The protein belongs to the TRAFAC class myosin-kinesin ATPase superfamily. Myosin family. In terms of tissue distribution, intestine.

Could play an important role in morphogenesis and function of intestinal microvilli. The protein is Unconventional myosin-Ia (MYO1A) of Gallus gallus (Chicken).